We begin with the raw amino-acid sequence, 511 residues long: MNLLSGWVRPLMLGCGLLGAALSAGSIQAAVCEYRVTNEWGSGFTASIRITNNGSSTINGWSVSWNYTDGSRVTSSWNAGLSGANPYSATPVGWNTSIPIGSSVEFGVQGNNGSSRAQVPAVTGAICGGQGSSAPSSVASSSSSSSVVSSTPRSSSSSVSSSVPGTSSSSSSSVLTGAQACNWYGTLTPLCNNTSNGWGYEDGRSCVARTTCSAQPAPYGIVSTSSSTPLSSSSSSRSSVASSSSLSSATSSSASSVSSVPPIDGGCNGYATRYWDCCKPHCGWSANVPSLVSPLQSCSANNTRLSDVSVGSSCDGGGGYMCWDKIPFAVSPTLAYGYAATSSGDVCGRCYQLQFTGSSYNAPGDPGSAALAGKTMIVQATNIGYDVSGGQFDILVPGGGVGAFNACSAQWGVSNAELGAQYGGFLAACKQQLGYNASLSQYKSCVLNRCDSVFGSRGLTQLQQGCTWFAEWFEAADNPSLKYKEVPCPAELTTRSGMNRSILNDIRNTCP.

Residues 1-29 (MNLLSGWVRPLMLGCGLLGAALSAGSIQA) form the signal peptide. One can recognise a CBM2 domain in the interval 30-130 (AVCEYRVTNE…AVTGAICGGQ (101 aa)). Residues Cys32 and Cys127 are joined by a disulfide bond. Positions 137 to 173 (SVASSSSSSSVVSSTPRSSSSSVSSSVPGTSSSSSSS) are disordered. One can recognise a CBM10 domain in the interval 180–209 (ACNWYGTLTPLCNNTSNGWGYEDGRSCVAR). 2 cysteine pairs are disulfide-bonded: Cys181/Cys212 and Cys191/Cys206. Residue Asp276 is the Nucleophile of the active site. Asp393 (proton donor) is an active-site residue.

The protein belongs to the glycosyl hydrolase 45 (cellulase K) family.

It localises to the periplasm. It carries out the reaction Endohydrolysis of (1-&gt;4)-beta-D-glucosidic linkages in cellulose, lichenin and cereal beta-D-glucans.. This enzyme catalyzes the endohydrolysis of 1,4-beta-glucosidic linkages in cellulose, lichenin and cereal beta-D-glucans. EGB is most active against barley beta-glucan, but showed significant activity against amorphous and crystalline cellulose. This is Endoglucanase B (celB) from Cellvibrio japonicus (strain Ueda107) (Pseudomonas fluorescens subsp. cellulosa).